The following is a 470-amino-acid chain: Myricetin 3-O-rhamnoside 1,2-glucosyltransferase UGT709G2 (470 aa).

Histidine 20 functions as the Proton acceptor in the catalytic mechanism. An anthocyanidin is bound at residue histidine 20. Aspartate 117 (charge relay) is an active-site residue. Residues alanine 340, glutamine 342, histidine 357, tryptophan 360, asparagine 361, serine 362, and glutamate 365 each contribute to the UDP-alpha-D-glucose site. Position 380 (alanine 380) interacts with an anthocyanidin. Residues aspartate 381 and glutamine 382 each contribute to the UDP-alpha-D-glucose site.

This sequence belongs to the UDP-glycosyltransferase family. Expressed in young cromes.

The enzyme catalyses myricetin 3-O-alpha-L-rhamnoside + UDP-alpha-D-glucose = myricetin 3-O-[beta-D-glucosyl-(1-&gt;2)-alpha-L-rhamnoside] + UDP + H(+). Its pathway is flavonoid metabolism. Glucosyltransferase involved in montbretin A (MbA) biosynthesis. Catalyzes the glucosylation of myricetin 3-O-alpha-L-rhamnoside (MR) to produce myricetin 3-O-[beta-D-glucosyl-(1-&gt;2)-alpha-L-rhamnoside] (MRG), a precursor of MbA. MbA is a potent inhibitor of human pancreatic alpha-amylase and is being developed as drug candidate to treat type-2 diabetes. In vitro, is able to transfer UDP-xylose with 50-fold less efficiency compared with UDP-glucose. In vitro, can use myricetin 3-O-glucoside and quercetin 3-O-glucoside as substrates, although these two flavonoids may not be physiological substrates in vivo. The sequence is that of Myricetin 3-O-rhamnoside 1,2-glucosyltransferase UGT709G2 from Crocosmia x crocosmiiflora (Montbretia).